The following is a 382-amino-acid chain: B3 domain-containing protein Os03g0622100 (382 aa).

The segment at residues 29–123 (CKHFLTYMVG…SFDVLIFDPS (95 aa)) is a DNA-binding region (TF-B3 1). 2 stretches are compositionally biased toward basic and acidic residues: residues 136–158 (RGFG…DKNG) and 193–202 (QDHREEKKEG). Positions 136–222 (RGFGREEKSA…EDVDKDGEDR (87 aa)) are disordered. Residues 203-218 (DDEDEDEDEDEDVDKD) are compositionally biased toward acidic residues. Positions 261–363 (KVIHASHLLS…AGDRLRRRPR (103 aa)) form a DNA-binding region, TF-B3 2.

The protein localises to the nucleus. The polypeptide is B3 domain-containing protein Os03g0622100 (Oryza sativa subsp. japonica (Rice)).